The sequence spans 209 residues: Small ribosomal subunit protein uS4 (209 aa).

Residues 23-46 form a disordered region; the sequence is SRNPLLKKPHPPGQHGMQRKKKSD. Residues 93-156 enclose the S4 RNA-binding domain; the sequence is CRLDNMVYRM…RKLQSVQESL (64 aa).

Belongs to the universal ribosomal protein uS4 family. Part of the 30S ribosomal subunit. Contacts protein S5. The interaction surface between S4 and S5 is involved in control of translational fidelity.

Its function is as follows. One of the primary rRNA binding proteins, it binds directly to 16S rRNA where it nucleates assembly of the body of the 30S subunit. Functionally, with S5 and S12 plays an important role in translational accuracy. The polypeptide is Small ribosomal subunit protein uS4 (Chlamydia felis (strain Fe/C-56) (Chlamydophila felis)).